The following is a 488-amino-acid chain: Alkaline nuclease (488 aa).

It belongs to the herpesviridae alkaline nuclease family. Interacts with major DNA-binding protein; this interaction increases the nuclease processivity of the alkaline exonuclease.

Its subcellular location is the host nucleus. The protein localises to the host cytoplasm. In terms of biological role, plays a role in processing non linear or branched viral DNA intermediates in order to promote the production of mature packaged unit-length linear progeny viral DNA molecules. Exhibits endonuclease and exonuclease activities and accepts both double-stranded and single-stranded DNA as substrate. Exonuclease digestion of DNA is in the 5'-&gt; 3' direction and the products are 5'-monophosphate nucleosides. Additionally, forms a recombinase with the major DNA-binding protein, which displays strand exchange activity. This Homo sapiens (Human) protein is Alkaline nuclease (U70).